The sequence spans 441 residues: 4-hydroxy-3-methylbut-2-en-1-yl diphosphate synthase (flavodoxin) (441 aa).

Positions 320, 323, 366, and 373 each coordinate [4Fe-4S] cluster.

It belongs to the IspG family. The cofactor is [4Fe-4S] cluster.

It catalyses the reaction (2E)-4-hydroxy-3-methylbut-2-enyl diphosphate + oxidized [flavodoxin] + H2O + 2 H(+) = 2-C-methyl-D-erythritol 2,4-cyclic diphosphate + reduced [flavodoxin]. It participates in isoprenoid biosynthesis; isopentenyl diphosphate biosynthesis via DXP pathway; isopentenyl diphosphate from 1-deoxy-D-xylulose 5-phosphate: step 5/6. In terms of biological role, converts 2C-methyl-D-erythritol 2,4-cyclodiphosphate (ME-2,4cPP) into 1-hydroxy-2-methyl-2-(E)-butenyl 4-diphosphate. The polypeptide is 4-hydroxy-3-methylbut-2-en-1-yl diphosphate synthase (flavodoxin) (Rhodopseudomonas palustris (strain ATCC BAA-98 / CGA009)).